We begin with the raw amino-acid sequence, 295 residues long: Ribosomal RNA small subunit methyltransferase A (295 aa).

6 residues coordinate S-adenosyl-L-methionine: N29, L31, G56, E77, D102, and N127.

It belongs to the class I-like SAM-binding methyltransferase superfamily. rRNA adenine N(6)-methyltransferase family. RsmA subfamily.

Its subcellular location is the cytoplasm. The enzyme catalyses adenosine(1518)/adenosine(1519) in 16S rRNA + 4 S-adenosyl-L-methionine = N(6)-dimethyladenosine(1518)/N(6)-dimethyladenosine(1519) in 16S rRNA + 4 S-adenosyl-L-homocysteine + 4 H(+). In terms of biological role, specifically dimethylates two adjacent adenosines (A1518 and A1519) in the loop of a conserved hairpin near the 3'-end of 16S rRNA in the 30S particle. May play a critical role in biogenesis of 30S subunits. The chain is Ribosomal RNA small subunit methyltransferase A from Anoxybacillus flavithermus (strain DSM 21510 / WK1).